The primary structure comprises 617 residues: MADLPQKVSNLSINNKENGGGGGKSSYVPPHLRSRGKPSFERSTPKQEDKVTGGDFFRRAGRQTGNNGGFFGFSKERNGGTSANYNRGGSSNYKSSGNRWVNGKHIPGPKNAKLEAELFGVHDDPDYHSSGIKFDNYDNIPVDASGKDVPEPILDFSSPPLDELLMENIKLASFTKPTPVQKYSIPIVTKGRDLMACAQTGSGKTGGFLFPLFTELFRSGPSPVPEKAQSFYSRKGYPSALVLAPTRELATQIFEEARKFTYRSWVRPCVVYGGAPIGNQMREVDRGCDLLVATPGRLNDLLERGKVSLANIKYLVLDEADRMLDMGFEPQIRHIVEECDMPSVENRQTLMFSATFPVDIQHLARDFLDNYIFLSVGRVGSTSENITQRILYVDDMDKKSALLDLLSAEHKGLTLIFVETKRMADQLTDFLIMQNFKATAIHGDRTQAERERALSAFKANVADILVATAVAARGLDIPNVTHVINYDLPSDIDDYVHRIGRTGRAGNTGVATSFFNSNNQNIVKGLMEILNEANQEVPTFLSDLSRQNSRGGRTRGGGGFFNSRNNGSRDYRKHGGNGSFGSTRPRNTGTSNWGSIGGGFRNDNEKNGYGNSNASWW.

Residues 1–90 (MADLPQKVSN…TSANYNRGGS (90 aa)) are disordered. A compositionally biased stretch (polar residues) spans 7–17 (KVSNLSINNKE). Basic and acidic residues predominate over residues 38 to 58 (PSFERSTPKQEDKVTGGDFFR). A compositionally biased stretch (polar residues) spans 79–90 (GGTSANYNRGGS). Residues 154-182 (LDFSSPPLDELLMENIKLASFTKPTPVQK) carry the Q motif motif. In terms of domain architecture, Helicase ATP-binding spans 185-374 (IPIVTKGRDL…RDFLDNYIFL (190 aa)). 198–205 (AQTGSGKT) lines the ATP pocket. A DEAD box motif is present at residues 318–321 (DEAD). The Helicase C-terminal domain occupies 385-545 (NITQRILYVD…EVPTFLSDLS (161 aa)). The disordered stretch occupies residues 542–617 (SDLSRQNSRG…GYGNSNASWW (76 aa)). Polar residues predominate over residues 580–594 (FGSTRPRNTGTSNWG).

This sequence belongs to the DEAD box helicase family. DDX3/DED1 subfamily.

The protein localises to the cytoplasm. It carries out the reaction ATP + H2O = ADP + phosphate + H(+). Its function is as follows. ATP-binding RNA helicase involved in translation initiation. Remodels RNA in response to ADP and ATP concentrations by facilitating disruption, but also formation of RNA duplexes. Redundant to DED1, may be required in conditions in which DED1 expression is decreased. The polypeptide is ATP-dependent RNA helicase DBP1 (DBP1) (Saccharomyces cerevisiae (strain ATCC 204508 / S288c) (Baker's yeast)).